The primary structure comprises 214 residues: MRLGSAILGLLLLQGYSSQPTTTQTSQEILQKSSQVSLVSNQPVTPRSSTMDKQSLSLPDLMSFQPQKHTLGPGTGTPERSSSSSSSSSSRRGEASLDATPSPETTSLQTKKMTILLTILPTPTSESVLTVAAFGVISFIVILVVVVIILVSVVSLRFKCRKNKESEDPQKPGSSGLSESCSTANGEKDSITLISMRNINVNNSKGSMSAEKIL.

The signal sequence occupies residues 1-18 (MRLGSAILGLLLLQGYSS). Topologically, residues 19 to 130 (QPTTTQTSQE…PTPTSESVLT (112 aa)) are extracellular. The disordered stretch occupies residues 23 to 107 (TQTSQEILQK…DATPSPETTS (85 aa)). Polar residues predominate over residues 28-57 (EILQKSSQVSLVSNQPVTPRSSTMDKQSLS). The span at 80–90 (RSSSSSSSSSS) shows a compositional bias: low complexity. A helical transmembrane segment spans residues 131 to 151 (VAAFGVISFIVILVVVVIILV). The Cytoplasmic portion of the chain corresponds to 152–214 (SVVSLRFKCR…KGSMSAEKIL (63 aa)). The disordered stretch occupies residues 163–184 (NKESEDPQKPGSSGLSESCSTA). A compositionally biased stretch (polar residues) spans 172–184 (PGSSGLSESCSTA). A phosphoserine mark is found at Ser204 and Ser207.

This sequence belongs to the ECSCR family. In terms of assembly, interacts with FLNA. Interacts with the 20S proteasome subunit PSMA7. May be heavily O-glycosylated. As to expression, expressed in all tissues examined, highest expression was observed in lung and spleen endothelial cells.

It is found in the cell membrane. The protein localises to the cytoplasm. Functionally, regulates endothelial chemotaxis and tube formation. Has a role in angiogenesis and apoptosis via modulation of the actin cytoskeleton and facilitation of proteasomal degradation of the apoptosis inhibitors BIRC3/IAP1 and BIRC2/IAP2. The protein is Endothelial cell-specific chemotaxis regulator (Ecscr) of Mus musculus (Mouse).